The following is a 478-amino-acid chain: Probable cytosolic Fe-S cluster assembly factor AAEL012261 (478 aa).

The [4Fe-4S] cluster site is built by cysteine 23, cysteine 69, cysteine 72, cysteine 75, cysteine 189, cysteine 245, cysteine 396, and cysteine 400.

The protein belongs to the NARF family.

Its function is as follows. Component of the cytosolic iron-sulfur (Fe/S) protein assembly machinery. Required for maturation of extramitochondrial Fe/S proteins. The protein is Probable cytosolic Fe-S cluster assembly factor AAEL012261 of Aedes aegypti (Yellowfever mosquito).